The chain runs to 121 residues: Ribosome-binding factor A (121 aa).

The protein belongs to the RbfA family. In terms of assembly, monomer. Binds 30S ribosomal subunits, but not 50S ribosomal subunits or 70S ribosomes.

The protein resides in the cytoplasm. Functionally, one of several proteins that assist in the late maturation steps of the functional core of the 30S ribosomal subunit. Associates with free 30S ribosomal subunits (but not with 30S subunits that are part of 70S ribosomes or polysomes). Required for efficient processing of 16S rRNA. May interact with the 5'-terminal helix region of 16S rRNA. This is Ribosome-binding factor A from Lactobacillus acidophilus (strain ATCC 700396 / NCK56 / N2 / NCFM).